The sequence spans 88 residues: Putative septation protein SpoVG (88 aa).

Belongs to the SpoVG family.

Functionally, could be involved in septation. The polypeptide is Putative septation protein SpoVG (Caldicellulosiruptor saccharolyticus (strain ATCC 43494 / DSM 8903 / Tp8T 6331)).